A 171-amino-acid polypeptide reads, in one-letter code: Endoribonuclease YbeY (171 aa).

H126, H130, and H136 together coordinate Zn(2+).

The protein belongs to the endoribonuclease YbeY family. Requires Zn(2+) as cofactor.

The protein localises to the cytoplasm. Functionally, single strand-specific metallo-endoribonuclease involved in late-stage 70S ribosome quality control and in maturation of the 3' terminus of the 16S rRNA. The polypeptide is Endoribonuclease YbeY (Rhizobium etli (strain CIAT 652)).